The following is a 109-amino-acid chain: Large ribosomal subunit protein uL24 (109 aa).

This sequence belongs to the universal ribosomal protein uL24 family. As to quaternary structure, part of the 50S ribosomal subunit.

Functionally, one of two assembly initiator proteins, it binds directly to the 5'-end of the 23S rRNA, where it nucleates assembly of the 50S subunit. In terms of biological role, one of the proteins that surrounds the polypeptide exit tunnel on the outside of the subunit. The polypeptide is Large ribosomal subunit protein uL24 (Hamiltonella defensa subsp. Acyrthosiphon pisum (strain 5AT)).